A 410-amino-acid chain; its full sequence is Riboflavin biosynthesis protein RibBA (410 aa).

The segment at M1–R205 is DHBP synthase. D-ribulose 5-phosphate-binding positions include R30–E31, D35, R144–T148, and E168. Residue E31 participates in Mg(2+) binding. H147 contacts Mg(2+). The segment at R206 to H410 is GTP cyclohydrolase II. R256–Q260 is a GTP binding site. Zn(2+) is bound by residues C261, C272, and C274. GTP-binding positions include Q277, E299–R301, and T321. The Proton acceptor; for GTP cyclohydrolase activity role is filled by D333. The Nucleophile; for GTP cyclohydrolase activity role is filled by R335. 2 residues coordinate GTP: T356 and K361.

It in the N-terminal section; belongs to the DHBP synthase family. The protein in the C-terminal section; belongs to the GTP cyclohydrolase II family. Requires Mg(2+) as cofactor. Mn(2+) serves as cofactor. Zn(2+) is required as a cofactor.

The catalysed reaction is D-ribulose 5-phosphate = (2S)-2-hydroxy-3-oxobutyl phosphate + formate + H(+). It catalyses the reaction GTP + 4 H2O = 2,5-diamino-6-hydroxy-4-(5-phosphoribosylamino)-pyrimidine + formate + 2 phosphate + 3 H(+). It participates in cofactor biosynthesis; riboflavin biosynthesis; 2-hydroxy-3-oxobutyl phosphate from D-ribulose 5-phosphate: step 1/1. Its pathway is cofactor biosynthesis; riboflavin biosynthesis; 5-amino-6-(D-ribitylamino)uracil from GTP: step 1/4. Its function is as follows. Catalyzes the conversion of D-ribulose 5-phosphate to formate and 3,4-dihydroxy-2-butanone 4-phosphate. Functionally, catalyzes the conversion of GTP to 2,5-diamino-6-ribosylamino-4(3H)-pyrimidinone 5'-phosphate (DARP), formate and pyrophosphate. This Chlorobium phaeovibrioides (strain DSM 265 / 1930) (Prosthecochloris vibrioformis (strain DSM 265)) protein is Riboflavin biosynthesis protein RibBA.